Here is a 331-residue protein sequence, read N- to C-terminus: Anthranilate phosphoribosyltransferase (331 aa).

5-phospho-alpha-D-ribose 1-diphosphate contacts are provided by residues glycine 79, 82–83, serine 87, 89–92, 107–115, and serine 119; these read GD, NIST, and KHCNSSISG. Position 79 (glycine 79) interacts with anthranilate. Serine 91 serves as a coordination point for Mg(2+). Asparagine 110 provides a ligand contact to anthranilate. Arginine 165 contributes to the anthranilate binding site. Mg(2+) is bound by residues aspartate 223 and glutamate 224.

The protein belongs to the anthranilate phosphoribosyltransferase family. Homodimer. Mg(2+) is required as a cofactor.

It carries out the reaction N-(5-phospho-beta-D-ribosyl)anthranilate + diphosphate = 5-phospho-alpha-D-ribose 1-diphosphate + anthranilate. It participates in amino-acid biosynthesis; L-tryptophan biosynthesis; L-tryptophan from chorismate: step 2/5. Catalyzes the transfer of the phosphoribosyl group of 5-phosphorylribose-1-pyrophosphate (PRPP) to anthranilate to yield N-(5'-phosphoribosyl)-anthranilate (PRA). This is Anthranilate phosphoribosyltransferase from Buchnera aphidicola subsp. Melaphis rhois.